The chain runs to 189 residues: MRVLGVDPGLTRCGFGVVDGGNGRTVTPVAVDVVRTPADLELSSRLLRISEAAESWIDLHRPEVVAIERVFAQHNVRTAMGTAQAGGVVALAAARRGIPVCFHTPSEVKAAVTGSGSADKAQVTAMVTRILKLAAAPRPADAADALALAICHCWRAPMIERMARAEAAAAEQKRRYQARLAEVKKAGTR.

Catalysis depends on residues Asp7, Glu68, and Asp141. Residues Asp7, Glu68, and Asp141 each contribute to the Mg(2+) site.

This sequence belongs to the RuvC family. In terms of assembly, homodimer which binds Holliday junction (HJ) DNA. The HJ becomes 2-fold symmetrical on binding to RuvC with unstacked arms; it has a different conformation from HJ DNA in complex with RuvA. In the full resolvosome a probable DNA-RuvA(4)-RuvB(12)-RuvC(2) complex forms which resolves the HJ. It depends on Mg(2+) as a cofactor.

Its subcellular location is the cytoplasm. It carries out the reaction Endonucleolytic cleavage at a junction such as a reciprocal single-stranded crossover between two homologous DNA duplexes (Holliday junction).. The RuvA-RuvB-RuvC complex processes Holliday junction (HJ) DNA during genetic recombination and DNA repair. Endonuclease that resolves HJ intermediates. Cleaves cruciform DNA by making single-stranded nicks across the HJ at symmetrical positions within the homologous arms, yielding a 5'-phosphate and a 3'-hydroxyl group; requires a central core of homology in the junction. The consensus cleavage sequence is 5'-(A/T)TT(C/G)-3'. Cleavage occurs on the 3'-side of the TT dinucleotide at the point of strand exchange. HJ branch migration catalyzed by RuvA-RuvB allows RuvC to scan DNA until it finds its consensus sequence, where it cleaves and resolves the cruciform DNA. The chain is Crossover junction endodeoxyribonuclease RuvC from Rhodococcus opacus (strain B4).